The sequence spans 393 residues: Acetylornithine aminotransferase (393 aa).

Pyridoxal 5'-phosphate-binding positions include 105 to 106 (GA) and Phe138. Arg141 provides a ligand contact to N(2)-acetyl-L-ornithine. 224–227 (DEVQ) contributes to the pyridoxal 5'-phosphate binding site. Residue Lys253 is modified to N6-(pyridoxal phosphate)lysine. Ser281 contacts N(2)-acetyl-L-ornithine. Position 282 (Thr282) interacts with pyridoxal 5'-phosphate.

The protein belongs to the class-III pyridoxal-phosphate-dependent aminotransferase family. ArgD subfamily. In terms of assembly, homodimer. The cofactor is pyridoxal 5'-phosphate.

Its subcellular location is the cytoplasm. The catalysed reaction is N(2)-acetyl-L-ornithine + 2-oxoglutarate = N-acetyl-L-glutamate 5-semialdehyde + L-glutamate. The protein operates within amino-acid biosynthesis; L-arginine biosynthesis; N(2)-acetyl-L-ornithine from L-glutamate: step 4/4. In Haemophilus ducreyi (strain 35000HP / ATCC 700724), this protein is Acetylornithine aminotransferase.